Reading from the N-terminus, the 342-residue chain is Subtilisin-like serine protease Rho m 2.0101 (342 aa).

The propeptide at 1 to 30 (TMELLEDLIEQVRQLPMVNFIEKNSLVHAN) is removed in mature form. The region spanning 1-30 (TMELLEDLIEQVRQLPMVNFIEKNSLVHAN) is the Inhibitor I9 domain. One can recognise a Peptidase S8 domain in the interval 39 to 342 (PWGLARISHR…GQNLTKFWGH (304 aa)). Catalysis depends on charge relay system residues Asp-75 and His-107. Asn-137 and Asn-171 each carry an N-linked (GlcNAc...) asparagine glycan. The active-site Charge relay system is the Ser-267. Asn-335 carries N-linked (GlcNAc...) asparagine glycosylation.

Belongs to the peptidase S8 family.

Functionally, serine protease. This chain is Subtilisin-like serine protease Rho m 2.0101, found in Rhodotorula mucilaginosa (Yeast).